The sequence spans 368 residues: Peptidoglycan-recognition protein LA (368 aa).

Residues 1–127 (MFEENNSPTT…KSPSRRVTRN (127 aa)) are Cytoplasmic-facing. Disordered regions lie at residues 21–46 (QRASPAQRLHNLTSAGSSTSSSGLPL) and 101–122 (INSNNANGNGNANRSRDKSPSR). Low complexity-rich tracts occupy residues 33-43 (TSAGSSTSSSG) and 102-113 (NSNNANGNGNAN). The helical transmembrane segment at 128-148 (TILLITLILLVLATGLIVLYV) threads the bilayer. Residues 149–368 (ELNRPKPELP…MKTESWDAKQ (220 aa)) lie on the Extracellular side of the membrane. The cysteines at positions 221 and 227 are disulfide-linked. In terms of domain architecture, N-acetylmuramoyl-L-alanine amidase spans 233–320 (TIQDSAIAEK…DVDYKLVAQN (88 aa)). 2 N-linked (GlcNAc...) asparagine glycosylation sites follow: asparagine 273 and asparagine 320.

It belongs to the N-acetylmuramoyl-L-alanine amidase 2 family. Expressed in uninduced hemocytes and mbn-2 cells.

The protein resides in the cell membrane. Peptidoglycan-recognition protein probably involved in innate immunity by binding to peptidoglycans (PGN) of bacteria and activating the immune response. The sequence is that of Peptidoglycan-recognition protein LA (PGRP-LA) from Drosophila melanogaster (Fruit fly).